The chain runs to 324 residues: Glyoxylate/hydroxypyruvate reductase B (324 aa).

Active-site residues include Arg237 and Glu266. His285 serves as the catalytic Proton donor.

It belongs to the D-isomer specific 2-hydroxyacid dehydrogenase family. GhrB subfamily. In terms of assembly, homodimer.

The protein resides in the cytoplasm. It carries out the reaction glycolate + NADP(+) = glyoxylate + NADPH + H(+). The enzyme catalyses (R)-glycerate + NAD(+) = 3-hydroxypyruvate + NADH + H(+). The catalysed reaction is (R)-glycerate + NADP(+) = 3-hydroxypyruvate + NADPH + H(+). Catalyzes the NADPH-dependent reduction of glyoxylate and hydroxypyruvate into glycolate and glycerate, respectively. This is Glyoxylate/hydroxypyruvate reductase B from Citrobacter koseri (strain ATCC BAA-895 / CDC 4225-83 / SGSC4696).